The following is a 193-amino-acid chain: Lipid A acyltransferase PagP (193 aa).

The first 32 residues, 1–32 (MNGMAVVMIIRKYFLIIALLVMPWLAIPSVSA), serve as a signal peptide directing secretion. Catalysis depends on residues His-65, Asp-108, and Ser-109.

It belongs to the lipid A palmitoyltransferase family. Homodimer.

Its subcellular location is the cell outer membrane. It catalyses the reaction a lipid A + a 1,2-diacyl-sn-glycero-3-phosphocholine = a hepta-acyl lipid A + a 2-acyl-sn-glycero-3-phosphocholine. The enzyme catalyses a lipid IVA + a 1,2-diacyl-sn-glycero-3-phosphocholine = a lipid IVB + a 2-acyl-sn-glycero-3-phosphocholine. The catalysed reaction is a lipid IIA + a 1,2-diacyl-sn-glycero-3-phosphocholine = a lipid IIB + a 2-acyl-sn-glycero-3-phosphocholine. Its function is as follows. Transfers a fatty acid residue from the sn-1 position of a phospholipid to the N-linked hydroxyfatty acid chain on the proximal unit of lipid A or its precursors. In Salmonella paratyphi C (strain RKS4594), this protein is Lipid A acyltransferase PagP.